The primary structure comprises 796 residues: Conidiophore development regulator abaA (796 aa).

The segment at residues 133–207 is a DNA-binding region (TEA); the sequence is GKDGEPVWSD…QVLDSFLKGD (75 aa). A disordered region spans residues 215–254; it reads REQSDRSTAQTQPVGPRWRTSMDHLPSSHYGTHATSSYPE. Residues 243-252 show a composition bias toward polar residues; that stretch reads HYGTHATSSY. The interval 341-362 is leucine-zipper-like; it reads LSDVNDPLNCEIILLETNLELM. The disordered stretch occupies residues 612–643; it reads EGLSDKTAPTSVLDPFPNLTQQTTSQTAGINV. The span at 629–643 shows a compositional bias: polar residues; the sequence is NLTQQTTSQTAGINV.

This sequence belongs to the TEC1 family.

It localises to the nucleus. In terms of biological role, brlA, abaA and wetA are pivotal regulators of conidiophore development and conidium maturation. They act individually and together to regulate their own expression and that of numerous other sporulation-specific gene. Controls temporal and spatial specificity in Aspergillus development. Directs the differentiation of phialides and is continuously required for maintenance of their function. Expression of abaA leads to activation of brlA and wetA, cessation of vegetative growth, and accentuated cellular vacuolization. Binds to the sequence 5'-CATTCY-3', where Y is a pyrimidine, making both major- and minor-groove contacts. Multiple abaA binding sites are present in the cis-acting regulatory regions of several developmentally controlled structural genes as well as those of the upstream regulatory gene brlA, the downstream regulatory gene wetA, and abaA itself. The chain is Conidiophore development regulator abaA from Emericella nidulans (strain FGSC A4 / ATCC 38163 / CBS 112.46 / NRRL 194 / M139) (Aspergillus nidulans).